Reading from the N-terminus, the 128-residue chain is Ribonuclease P protein component (128 aa).

Belongs to the RnpA family. Consists of a catalytic RNA component (M1 or rnpB) and a protein subunit.

The enzyme catalyses Endonucleolytic cleavage of RNA, removing 5'-extranucleotides from tRNA precursor.. Its function is as follows. RNaseP catalyzes the removal of the 5'-leader sequence from pre-tRNA to produce the mature 5'-terminus. It can also cleave other RNA substrates such as 4.5S RNA. The protein component plays an auxiliary but essential role in vivo by binding to the 5'-leader sequence and broadening the substrate specificity of the ribozyme. In Prochlorococcus marinus (strain AS9601), this protein is Ribonuclease P protein component.